Consider the following 368-residue polypeptide: tRNA-specific 2-thiouridylase MnmA (368 aa).

ATP-binding positions include 14–21 (AMSGGVDS) and L40. Catalysis depends on C108, which acts as the Nucleophile. A disulfide bridge links C108 with C204. Residue G132 coordinates ATP. The interaction with tRNA stretch occupies residues 154-156 (KDQ). The Cysteine persulfide intermediate role is filled by C204.

The protein belongs to the MnmA/TRMU family.

The protein resides in the cytoplasm. The enzyme catalyses S-sulfanyl-L-cysteinyl-[protein] + uridine(34) in tRNA + AH2 + ATP = 2-thiouridine(34) in tRNA + L-cysteinyl-[protein] + A + AMP + diphosphate + H(+). Catalyzes the 2-thiolation of uridine at the wobble position (U34) of tRNA, leading to the formation of s(2)U34. The chain is tRNA-specific 2-thiouridylase MnmA from Rickettsia canadensis (strain McKiel).